We begin with the raw amino-acid sequence, 372 residues long: Ligninase LG3 (372 aa).

A signal peptide spans 1–21 (MAFKQLFAAISLALSLSAANA). Positions 22-28 (AAVIEKR) are excised as a propeptide. Cystine bridges form between C31–C43 and C62–C148. H75 functions as the Proton acceptor in the catalytic mechanism. Residues D76, G94, D96, and S98 each coordinate Ca(2+). Heme b is bound at residue H204. S205, D222, T224, I227, and D229 together coordinate Ca(2+). Residues C277 and C345 are joined by a disulfide bond. N-linked (GlcNAc...) asparagine glycosylation occurs at N285. Over residues 350–361 (FPTLTTLPGPET) the composition is skewed to low complexity. Positions 350 to 372 (FPTLTTLPGPETSVQRIPPPPGA) are disordered.

This sequence belongs to the peroxidase family. Ligninase subfamily. It depends on heme b as a cofactor. The cofactor is Ca(2+).

The enzyme catalyses 1-(3,4-dimethoxyphenyl)-2-(2-methoxyphenoxy)propane-1,3-diol + H2O2 = 3,4-dimethoxybenzaldehyde + guaiacol + glycolaldehyde + H2O. The catalysed reaction is 2 (3,4-dimethoxyphenyl)methanol + H2O2 = 2 (3,4-dimethoxyphenyl)methanol radical + 2 H2O. It participates in secondary metabolite metabolism; lignin degradation. Functionally, depolymerization of lignin. Catalyzes the C(alpha)-C(beta) cleavage of the propyl side chains of lignin. The chain is Ligninase LG3 (GLG3) from Phanerodontia chrysosporium (White-rot fungus).